We begin with the raw amino-acid sequence, 940 residues long: MLLLLGLCLGLSQCVGSQEEAQSWGHSSEQDGLRVPRQVRLLQRLKTKPLMTEFSVKSTIISRYAFTTVSCRMLNRASEDQDVEFQMQIPAAAFITNFTMLIGEKVYQGEITEREKKSGDRVKEKRNKTTEENGEKGTEIFRASAVIPSKDKAAFFLSYEELLQRRLGKYEHSISVRPQQLSGRLSVDVNILESAGIASLEVLPLRNSRQRGSGRGEDDSGPPPSTVINQNETFANIIFKPTVVQQARIAQNGILGDFIIRYDVNREQSIGDIQVLNGYFVHYFAPKDLPPLPKNVVFVLDSSASMVGTKLRQTKDALFTILHDLRPQDHFSIIGFSNRIKVWKDHFDISHSRQHQGWQSVHSPYVAHWRHRHQRGLAEGHQAPQQVRGPQWHWRPERVPHCLPDGWEAHGRGDAHPQDPQQHPRGRPRPSLHLHIGIGNDVDFRLLEKLSLENCGLTRRVHEEEDAGSQLIGFYDEIRTPLLSDIRIDYPPSSVVQATKTLFPNYFNGSEIIIAGKLVDRKLDHLHVEVTASNSKKFVIPKTDVPVGPQKAGKDVTGSPRPGGDGERNPNHIERLWSYLTTKELLSSWLQSDDEPEKERLRQRAQALAVSYRFLTPFTSMKLRGPVPRTDGLKEAHGMSAAMGPEPVVQSVRGAGTQPGPLLKKPYQPRIKISKTSVDGDPHFVVDFPLSKLTVCFNIDGQPGDILRLVSDHMDSGVTVNGELIGAPPNGHKKQRTYFRTITILINKPERSYLEITPSRVILDGGDRLVLPCNQSVVVGSRGLEVSVSANANVTVTIQGSIAFVIPIHLYKKPAPFQRHHLGFYIANSEGLSSNCHGLLGQFLNQDARLTEDPAGPSQNLTHSLLLQVGEGPEAVLTVKGRQVPVVWKQRKIYNGEEQIDCWFARNNAAKLIDGEYKDYLASHPFDTGMTLGRGMSREL.

An N-terminal signal peptide occupies residues 1–16; it reads MLLLLGLCLGLSQCVG. The region spanning 35-161 is the VIT domain; it reads VPRQVRLLQR…KAAFFLSYEE (127 aa). N-linked (GlcNAc...) asparagine glycans are attached at residues Asn-97 and Asn-127. Disordered stretches follow at residues 117-136 and 208-227; these read KSGDRVKEKRNKTTEENGEK and SRQRGSGRGEDDSGPPPSTV. Asn-231 carries an N-linked (GlcNAc...) asparagine glycan. In terms of domain architecture, VWFA spans 295–478; sequence NVVFVLDSSA…SQLIGFYDEI (184 aa). Positions 405–432 are disordered; the sequence is DGWEAHGRGDAHPQDPQQHPRGRPRPSL. The segment covering 407 to 417 has biased composition (basic and acidic residues); the sequence is WEAHGRGDAHP. Asn-508 carries an N-linked (GlcNAc...) asparagine glycan. Positions 541–571 are disordered; that stretch reads PKTDVPVGPQKAGKDVTGSPRPGGDGERNPN. N-linked (GlcNAc...) asparagine glycosylation is found at Asn-774, Asn-793, and Asn-860.

The protein belongs to the ITIH family.

The protein resides in the secreted. Its function is as follows. May act as a tumor suppressor. The sequence is that of Inter-alpha-trypsin inhibitor heavy chain H5 (ITIH5) from Pongo abelii (Sumatran orangutan).